We begin with the raw amino-acid sequence, 185 residues long: UPF0397 protein LBA0922 (185 aa).

A run of 5 helical transmembrane segments spans residues 11-31, 45-65, 72-92, 111-131, and 146-166; these read VVAI…TSIP, FLAF…GFIG, IMYG…GWII, IILF…VVAP, and FVQG…IGTI.

The protein belongs to the UPF0397 family.

Its subcellular location is the cell membrane. The polypeptide is UPF0397 protein LBA0922 (Lactobacillus acidophilus (strain ATCC 700396 / NCK56 / N2 / NCFM)).